A 321-amino-acid chain; its full sequence is uncharacterized protein (321 aa).

Residue 28-35 coordinates ATP; that stretch reads GPINSGKT.

This sequence belongs to the archaeal ATPase family.

This is an uncharacterized protein from Pyrococcus horikoshii (strain ATCC 700860 / DSM 12428 / JCM 9974 / NBRC 100139 / OT-3).